The following is a 58-amino-acid chain: Apelin receptor early endogenous ligand (58 aa).

A signal peptide spans M1–A22.

Belongs to the Elabela/Toddler family. Interacts with aplnra and aplnrb. As to expression, expressed ubiquitously during late blastula and gastrula stages and becomes restricted to the lateral mesoderm, endoderm, and anterior and posterior notochord after gastrulation.

The protein resides in the secreted. Its subcellular location is the extracellular space. Peptide hormone that functions as endogenous ligand for the G-protein-coupled apelin receptor (aplnra and/or aplnrb), that plays a role in the regulation of normal cardiovascular function and fluid homeostasis. Functions as a balanced agonist activating both G(i) protein pathway and beta-arrestin pathway of APLNR. Downstream G proteins activation, apelin can inhibit cAMP production and activate key intracellular effectors such as ERKs. On the other hand, APLNR activation induces beta-arrestin recruitment to the membrane leading to desensitization and internalization of the receptor. Required for mesendodermal differentiation, blood vessels formation and heart morphogenesis during early development and for adult cardiovascular homeostasis. Acts as a motogen by promoting mesendodermal cell migration during gastrulation by binding and activating the apelin receptor. Acts as an early embryonic regulator of cellular movement with a role in migration and development of cardiac progenitor cells. May act as a chemoattractant for the activation of angioblast migration toward the embryonic midline, i.e. the position of the future vessel formation, during vasculogenesis. Positively regulates sinus venosus (SV)-derived endothelial cells migration into the developing heart to promote coronary blood vessel sprouting. Involved in cardioprotective functions during heart failure. Mediates myocardial contractility in an ERK1/2-dependent manner. This is Apelin receptor early endogenous ligand from Danio rerio (Zebrafish).